Here is a 122-residue protein sequence, read N- to C-terminus: Large ribosomal subunit protein uL14 (122 aa).

The protein belongs to the universal ribosomal protein uL14 family. As to quaternary structure, part of the 50S ribosomal subunit. Forms a cluster with proteins L3 and L19. In the 70S ribosome, L14 and L19 interact and together make contacts with the 16S rRNA in bridges B5 and B8.

Functionally, binds to 23S rRNA. Forms part of two intersubunit bridges in the 70S ribosome. This Corynebacterium glutamicum (strain R) protein is Large ribosomal subunit protein uL14.